Consider the following 233-residue polypeptide: Ribonuclease 3 (233 aa).

The RNase III domain maps to 4–126; it reads LNKLMERLGH…IVGAIYIDAG (123 aa). Residue Glu39 coordinates Mg(2+). Residue Asp43 is part of the active site. The Mg(2+) site is built by Asp112 and Glu115. Glu115 is an active-site residue. In terms of domain architecture, DRBM spans 153–222; that stretch reads DAKSLLQEWL…AKRFLELLDD (70 aa).

This sequence belongs to the ribonuclease III family. As to quaternary structure, homodimer. It depends on Mg(2+) as a cofactor.

The protein resides in the cytoplasm. The enzyme catalyses Endonucleolytic cleavage to 5'-phosphomonoester.. Functionally, digests double-stranded RNA. Involved in the processing of primary rRNA transcript to yield the immediate precursors to the large and small rRNAs (23S and 16S). Processes some mRNAs, and tRNAs when they are encoded in the rRNA operon. Processes pre-crRNA and tracrRNA of type II CRISPR loci if present in the organism. In Coxiella burnetii (strain CbuK_Q154) (Coxiella burnetii (strain Q154)), this protein is Ribonuclease 3.